The following is a 201-amino-acid chain: Putative toxin HigB2 (201 aa).

It belongs to the mycobacterial HigB family.

Functionally, putative toxic component of a type II toxin-antitoxin (TA) system. Its cognate antitoxin would be HigA2. The sequence is that of Putative toxin HigB2 from Mycobacterium tuberculosis (strain ATCC 25618 / H37Rv).